We begin with the raw amino-acid sequence, 537 residues long: Cytochrome P450 monooxygenase claR (537 aa).

The helical transmembrane segment at 23-43 (VVTITEVALGIITLYLLGSYI) threads the bilayer. Cys454 contributes to the heme binding site.

The protein belongs to the cytochrome P450 family. It depends on heme as a cofactor.

The protein localises to the membrane. The catalysed reaction is (2E)-geranylhydroquinone + reduced [NADPH--hemoprotein reductase] + O2 = wigandol + oxidized [NADPH--hemoprotein reductase] + 2 H2O + H(+). The protein operates within secondary metabolite biosynthesis; terpenoid biosynthesis. Functionally, cytochrome P450 monooxygenase; part of the gene cluster that mediates the biosynthesis of clavilactone A, a meroterpenoid that features a unique benzo-fused ten-membered carbocyclic ring unit with an alpha,beta-epoxy-gamma-lactone moiety, forming an intriguing 10/5/3 tricyclic nested skeleton. ClaR, ClaS and ClaT are sufficient to produce clavilactone A. ClaR acts as a macrocyclase to catalyze the oxidative cyclization of the isopentenyl to the nonterpenoid moieties to form the benzo-fused macrocycle, leading to wigantol. The biosynthesis begins with the prenyltransferase claS that transfers geranyl pyrophosphate (GPP) to hydroquinone to produces geranylhydroquinone. The cytochrome P450 monooxygenase claR then catalyzes the diradical coupling reaction between the intramolecular hydroquinone and allyl moieties to form the benzo-fused ten-membered carbocyclic ring unit of wigantol. Finally the cytochrome P450 monooxygenase claT exquisitely and stereoselectively assembles the alpha,beta-epoxy-gamma-lactone moiety, producing clavilactone A via arnebinol A. This chain is Cytochrome P450 monooxygenase claR, found in Ampulloclitocybe clavipes (Club foot).